The sequence spans 181 residues: Small ribosomal subunit protein uS4 (181 aa).

Residues 104–166 (RRLQTIVYKK…VTSSFKSRPP (63 aa)) enclose the S4 RNA-binding domain.

The protein belongs to the universal ribosomal protein uS4 family. As to quaternary structure, part of the 30S ribosomal subunit. Contacts protein S5. The interaction surface between S4 and S5 is involved in control of translational fidelity.

One of the primary rRNA binding proteins, it binds directly to 16S rRNA where it nucleates assembly of the body of the 30S subunit. In terms of biological role, with S5 and S12 plays an important role in translational accuracy. This chain is Small ribosomal subunit protein uS4, found in Saccharolobus islandicus (strain Y.N.15.51 / Yellowstone #2) (Sulfolobus islandicus).